The chain runs to 316 residues: Lipoyl synthase (316 aa).

The span at 1-19 (MRDLKIPEQRHPEKAHRPD) shows a compositional bias: basic and acidic residues. Residues 1–31 (MRDLKIPEQRHPEKAHRPDNAQPKKPSWIRV) form a disordered region. The [4Fe-4S] cluster site is built by cysteine 55, cysteine 60, cysteine 66, cysteine 81, cysteine 85, cysteine 88, and serine 295. The Radical SAM core domain maps to 67 to 284 (WSQGHATMMI…EKAAYGKGFL (218 aa)).

The protein belongs to the radical SAM superfamily. Lipoyl synthase family. Requires [4Fe-4S] cluster as cofactor.

It is found in the cytoplasm. The enzyme catalyses [[Fe-S] cluster scaffold protein carrying a second [4Fe-4S](2+) cluster] + N(6)-octanoyl-L-lysyl-[protein] + 2 oxidized [2Fe-2S]-[ferredoxin] + 2 S-adenosyl-L-methionine + 4 H(+) = [[Fe-S] cluster scaffold protein] + N(6)-[(R)-dihydrolipoyl]-L-lysyl-[protein] + 4 Fe(3+) + 2 hydrogen sulfide + 2 5'-deoxyadenosine + 2 L-methionine + 2 reduced [2Fe-2S]-[ferredoxin]. The protein operates within protein modification; protein lipoylation via endogenous pathway; protein N(6)-(lipoyl)lysine from octanoyl-[acyl-carrier-protein]: step 2/2. In terms of biological role, catalyzes the radical-mediated insertion of two sulfur atoms into the C-6 and C-8 positions of the octanoyl moiety bound to the lipoyl domains of lipoate-dependent enzymes, thereby converting the octanoylated domains into lipoylated derivatives. The protein is Lipoyl synthase of Ruegeria sp. (strain TM1040) (Silicibacter sp.).